Consider the following 426-residue polypeptide: Alpha/beta hydrolase pydG (426 aa).

The protein belongs to the AB hydrolase superfamily. In terms of assembly, homodimer.

The protein operates within mycotoxin biosynthesis. Functionally, alpha/beta hydrolasee; part of the gene cluster that mediates the biosynthesis of pyrrocidines, fungal natural products containing a macrocyclic para-cyclophane connected to a decahydrofluorene ring system that show potent antibiotic activities toward Gram-negative bacteria. Within the pathway, pydG catalyzes the Knoevenagel condensation that affords the 3-pyrrolin-2-one ring, using as substrate the polyketide-tyrosyl acyl thioester product of pydA. The pathway begins with the PKS-NRPS pydA which, with the help of the trans-enoyl reductase pydC, synthesizes the polyketide-tyrosyl acyl thioester product which can be reductively off-loaded by the terminal reductase (R) domain in pydA. The alpha/beta hydrolase pydG is then required to catalyze the subsequent Knoevenagel condensation that affords the 3-pyrrolin-2-one ring, whereas the four proteins pydB, pydE, pydX and pydZ then function synergistically to form the cyclophane. PydB and the membrane-bound pydX and pydZ are lipid-binding proteins that can sequester and mold the pdyG product into the inverse S-shape. Binding of the medium chain reductase pydE to the complex would trigger the cascade oxidative cyclization. PydY is involved in the Diels-Alder cycloaddition that forms the decahydrofluorene core. Additional non-enzymatic hydroxylation yields pyrrocidine A2 which can be further reduced into pyrrocidine B by an endogenous reductase. This chain is Alpha/beta hydrolase pydG, found in Acremonium sp.